A 329-amino-acid chain; its full sequence is Alpha/beta hydrolase domain-containing protein 17C (329 aa).

Positions 46-85 (APEQRGPGAPAPASAASTSSASAAAQPAPQQPEEGGAGPG) are disordered. Positions 51 to 79 (GPGAPAPASAASTSSASAAAQPAPQQPEE) are enriched in low complexity. Active-site charge relay system residues include S211, D276, and H305.

This sequence belongs to the AB hydrolase superfamily. ABHD17 family. In terms of processing, palmitoylated on cysteine residues located in a cysteine cluster at the N-terminus which promotes membrane localization. Palmitoylation is required for post-synaptic localization and for depalmitoylating activity towards DLG4/PSD95.

The protein resides in the recycling endosome membrane. Its subcellular location is the cell projection. The protein localises to the dendritic spine. It localises to the postsynaptic density membrane. The catalysed reaction is S-hexadecanoyl-L-cysteinyl-[protein] + H2O = L-cysteinyl-[protein] + hexadecanoate + H(+). Its function is as follows. Hydrolyzes fatty acids from S-acylated cysteine residues in proteins. Has depalmitoylating activity towards NRAS and DLG4/PSD95. The protein is Alpha/beta hydrolase domain-containing protein 17C of Bos taurus (Bovine).